The chain runs to 492 residues: Glutamyl-tRNA(Gln) amidotransferase subunit A (492 aa).

Residues K79 and S154 each act as charge relay system in the active site. The active-site Acyl-ester intermediate is S178.

The protein belongs to the amidase family. GatA subfamily. As to quaternary structure, heterotrimer of A, B and C subunits.

The catalysed reaction is L-glutamyl-tRNA(Gln) + L-glutamine + ATP + H2O = L-glutaminyl-tRNA(Gln) + L-glutamate + ADP + phosphate + H(+). Its function is as follows. Allows the formation of correctly charged Gln-tRNA(Gln) through the transamidation of misacylated Glu-tRNA(Gln) in organisms which lack glutaminyl-tRNA synthetase. The reaction takes place in the presence of glutamine and ATP through an activated gamma-phospho-Glu-tRNA(Gln). The chain is Glutamyl-tRNA(Gln) amidotransferase subunit A from Acinetobacter baumannii (strain ATCC 17978 / DSM 105126 / CIP 53.77 / LMG 1025 / NCDC KC755 / 5377).